A 344-amino-acid polypeptide reads, in one-letter code: Lipase chaperone (344 aa).

The helical transmembrane segment at 14-34 (VAVYGAVGLAAIAGVAIWSGA) threads the bilayer. The span at 45–57 (LSADAAARDGASA) shows a compositional bias: low complexity. The interval 45-78 (LSADAAARDGASAAPPPPARPASAGMPSPLAGSS) is disordered.

This sequence belongs to the lipase chaperone family.

The protein resides in the cell inner membrane. Functionally, may be involved in the folding of the extracellular lipase during its passage through the periplasm. The sequence is that of Lipase chaperone from Burkholderia ambifaria (strain ATCC BAA-244 / DSM 16087 / CCUG 44356 / LMG 19182 / AMMD) (Burkholderia cepacia (strain AMMD)).